The following is a 320-amino-acid chain: Lipoyl synthase (320 aa).

Positions 67, 72, 78, 93, 97, 100, and 307 each coordinate [4Fe-4S] cluster. Residues 79 to 296 (FNHGTATFMI…RDKAQAMGFE (218 aa)) form the Radical SAM core domain.

The protein belongs to the radical SAM superfamily. Lipoyl synthase family. The cofactor is [4Fe-4S] cluster.

It is found in the cytoplasm. It carries out the reaction [[Fe-S] cluster scaffold protein carrying a second [4Fe-4S](2+) cluster] + N(6)-octanoyl-L-lysyl-[protein] + 2 oxidized [2Fe-2S]-[ferredoxin] + 2 S-adenosyl-L-methionine + 4 H(+) = [[Fe-S] cluster scaffold protein] + N(6)-[(R)-dihydrolipoyl]-L-lysyl-[protein] + 4 Fe(3+) + 2 hydrogen sulfide + 2 5'-deoxyadenosine + 2 L-methionine + 2 reduced [2Fe-2S]-[ferredoxin]. It participates in protein modification; protein lipoylation via endogenous pathway; protein N(6)-(lipoyl)lysine from octanoyl-[acyl-carrier-protein]: step 2/2. In terms of biological role, catalyzes the radical-mediated insertion of two sulfur atoms into the C-6 and C-8 positions of the octanoyl moiety bound to the lipoyl domains of lipoate-dependent enzymes, thereby converting the octanoylated domains into lipoylated derivatives. In Pasteurella multocida (strain Pm70), this protein is Lipoyl synthase.